We begin with the raw amino-acid sequence, 351 residues long: Renin receptor (351 aa).

Positions 1–17 (MAVLVVFLSFLVADVFG) are cleaved as a signal peptide. Residues 18 to 303 (NEFSILRSPG…YNLAYKYNFE (286 aa)) are Extracellular-facing. Residues 304–324 (YPVVFNLVLWIMIGLALTLIV) traverse the membrane as a helical segment. Residues 325–351 (TCYNIWNMDPGYDSIIYRMTNQKIRMD) are Cytoplasmic-facing. The short motif at 347–351 (KIRMD) is the Mediates retrograde transport to the ER element.

Interacts with renin. Accessory component of the multisubunit proton-transporting vacuolar (V)-ATPase protein pump. Interacts (via N-terminus) with ATP6AP1 (via N-terminus). Interacts with ATP6V0D1; ATP6V0D1 is a V-ATPase complex subunit and the interaction promotes V-ATPase complex assembly. Interacts with TMEM9; TMEM9 is a V-ATPase assembly regulator and the interaction induces the interaction with ATP6V0D1. Interacts with VMA21 (via N-terminus); VMA21 is a V-ATPase accessory component. Phosphorylated. Post-translationally, proteolytically cleaved by a furin-like convertase in the trans-Golgi network to generate N- and C-terminal fragments. As to expression, expressed in the brain.

It is found in the endoplasmic reticulum membrane. It localises to the lysosome membrane. The protein localises to the cytoplasmic vesicle. The protein resides in the autophagosome membrane. Its subcellular location is the cell projection. It is found in the dendritic spine membrane. It localises to the axon. The protein localises to the endosome membrane. The protein resides in the clathrin-coated vesicle membrane. Its subcellular location is the secretory vesicle. It is found in the synaptic vesicle membrane. Functionally, multifunctional protein which functions as a renin, prorenin cellular receptor and is involved in the assembly of the lysosomal proton-transporting V-type ATPase (V-ATPase) and the acidification of the endo-lysosomal system. May mediate renin-dependent cellular responses by activating ERK1 and ERK2. By increasing the catalytic efficiency of renin in AGT/angiotensinogen conversion to angiotensin I, may also play a role in the renin-angiotensin system (RAS). Through its function in V-type ATPase (v-ATPase) assembly and acidification of the lysosome it regulates protein degradation and may control different signaling pathways important for proper brain development, synapse morphology and synaptic transmission. This chain is Renin receptor (ATP6AP2), found in Bos taurus (Bovine).